The chain runs to 260 residues: Serine/threonine-protein acetyltransferase NGR_a02610 (260 aa).

Active-site residues include His123 and Glu143. His123 is a binding site for CoA. Residue 180–181 (KS) coordinates CoA. Cys185 is a catalytic residue.

This sequence belongs to the acetyltransferase YopJ family.

The catalysed reaction is L-threonyl-[protein] + acetyl-CoA = O-acetyl-L-threonyl-[protein] + CoA. The enzyme catalyses L-seryl-[protein] + acetyl-CoA = O-acetyl-L-seryl-[protein] + CoA. Its function is as follows. Serine/threonine-protein acetyltransferase translocated into infected cells, which mediates acetylation of serine and threonine residues of host target proteins. This Sinorhizobium fredii (strain NBRC 101917 / NGR234) protein is Serine/threonine-protein acetyltransferase NGR_a02610.